Reading from the N-terminus, the 217-residue chain is Elongation factor Ts (217 aa).

The involved in Mg(2+) ion dislocation from EF-Tu stretch occupies residues 82-85 (TDFV).

It belongs to the EF-Ts family.

The protein resides in the cytoplasm. Functionally, associates with the EF-Tu.GDP complex and induces the exchange of GDP to GTP. It remains bound to the aminoacyl-tRNA.EF-Tu.GTP complex up to the GTP hydrolysis stage on the ribosome. This chain is Elongation factor Ts, found in Desulfitobacterium hafniense (strain DSM 10664 / DCB-2).